The chain runs to 436 residues: Trigger factor (436 aa).

Disordered regions lie at residues 1-26 (MQVS…RVEN) and 81-100 (QESL…TGEG). Residues 161–246 (EDRVVIDFHG…VKRVEEPQLP (86 aa)) form the PPIase FKBP-type domain.

The protein belongs to the FKBP-type PPIase family. Tig subfamily.

The protein resides in the cytoplasm. It carries out the reaction [protein]-peptidylproline (omega=180) = [protein]-peptidylproline (omega=0). Its function is as follows. Involved in protein export. Acts as a chaperone by maintaining the newly synthesized protein in an open conformation. Functions as a peptidyl-prolyl cis-trans isomerase. The sequence is that of Trigger factor from Halorhodospira halophila (strain DSM 244 / SL1) (Ectothiorhodospira halophila (strain DSM 244 / SL1)).